Here is a 398-residue protein sequence, read N- to C-terminus: Acetate kinase 1 (398 aa).

Residue asparagine 9 coordinates Mg(2+). Position 16 (lysine 16) interacts with ATP. Residue arginine 89 coordinates substrate. The Proton donor/acceptor role is filled by aspartate 146. ATP contacts are provided by residues histidine 206–glycine 210, aspartate 281–arginine 283, and glycine 329–asparagine 333. Residue glutamate 384 coordinates Mg(2+).

It belongs to the acetokinase family. In terms of assembly, homodimer. The cofactor is Mg(2+). Mn(2+) is required as a cofactor.

Its subcellular location is the cytoplasm. The catalysed reaction is acetate + ATP = acetyl phosphate + ADP. It participates in metabolic intermediate biosynthesis; acetyl-CoA biosynthesis; acetyl-CoA from acetate: step 1/2. In terms of biological role, catalyzes the formation of acetyl phosphate from acetate and ATP. Can also catalyze the reverse reaction. This is Acetate kinase 1 from Aliivibrio fischeri (strain ATCC 700601 / ES114) (Vibrio fischeri).